We begin with the raw amino-acid sequence, 1807 residues long: Atrochrysone carboxylic acid synthase Agnpks1 (1807 aa).

Residues 41 to 173 (LFRELHNHSK…ITGAQVIRQA (133 aa)) form an N-terminal acylcarrier protein transacylase domain (SAT) region. A Ketosynthase family 3 (KS3) domain is found at 411–845 (QSKIAIVGMS…GGNTTILLEE (435 aa)). Catalysis depends on for beta-ketoacyl synthase activity residues cysteine 584, histidine 720, and histidine 763. The segment at 946 to 1265 (FTFTGQGASY…SLAALHCAGV (320 aa)) is malonyl-CoA:ACP transacylase (MAT) domain. A product template (PT) domain region spans residues 1334–1653 (TSTVHQIIQE…RILLSRFFSA (320 aa)). Residues 1338-1473 (HQIIQESIDG…ATLIYGDPSE (136 aa)) form an N-terminal hotdog fold region. Residues 1338–1648 (HQIIQESIDG…FRRYPRILLS (311 aa)) enclose the PKS/mFAS DH domain. The active-site Proton acceptor; for dehydratase activity is the histidine 1370. Residues 1500–1648 (VANRFNHQMA…FRRYPRILLS (149 aa)) are C-terminal hotdog fold. The active-site Proton donor; for dehydratase activity is the aspartate 1559. The 75-residue stretch at 1732–1806 (DTTTAKAIQI…DLRSWLEEYY (75 aa)) folds into the Carrier domain. Serine 1766 bears the O-(pantetheine 4'-phosphoryl)serine mark.

The catalysed reaction is holo-[ACP] + 8 malonyl-CoA + 8 H(+) = atrochrysone carboxyl-[ACP] + 8 CO2 + 8 CoA + 2 H2O. It participates in secondary metabolite biosynthesis. Functionally, non-reducing polyketide synthase; part of the gene cluster that mediates the biosynthesis of agnestins, dihydroxy-xanthone metabolites. The pathway begins with the assembly and cyclization of atrochrysone thioester by the non-reducing polyketide synthase Agnpks1. The atrochrysone carboxyl ACP thioesterase AgnL7 then breaks the thioester bond and releases the atrochrysone carboxylic acid as the first enzyme-free intermediate. The decarboxylase AgnL1 then catalyzes the concerted decarboxylation-elimination required to convert atochrysone carboxylic acid into emodin anthrone, which is further oxidized to emodin by the anthrone oxygenase AgnL2. Emodin then undergoes reduction catalyzed by the oxidoreductase AgnL4 to yield the dihydroquinone tautomer which is the substrate for reduction by the short chain dehydrogenase AgnL6 reduction to produce hydroxyketone, followed by AgnL8 dehydration and likely spontaneous autoxidation to chrysophanol. Baeyer-Villiger oxidation by the oxidase AgnL3 leads to monodictyphenone via cleavage of the C-10/C-10a bond of chrysophanol. Alternative cleavage at the C-4a/C-10 bond of chrysophanol also leads to the formation some cephalone F. Further conversion to agnestins A and B, requires reduction to dihydro-monodictyphenone, oxidation to agnestin C probably via an epoxide, and rearrangement to either agnestin A or agnestin B directly, although agnestin A or agnestin B can also interconvert. Within the cluster, AgnR1 is the only unassigned oxidoreductase present which could be involved in this conversion. However, AgnR1 seems not to be involved in this step, and thus genes involved in the proposed oxidation/reduction may be located elsewhere on the genome. Further agnestin A derivatives are probably formed by spontaneous decarboxylations, dehydrations and methanolysis reactions. This chain is Atrochrysone carboxylic acid synthase Agnpks1, found in Paecilomyces divaricatus (Penicillium divaricatum).